The sequence spans 81 residues: Putative membrane protein insertion efficiency factor (81 aa).

It belongs to the UPF0161 family.

It is found in the cell inner membrane. In terms of biological role, could be involved in insertion of integral membrane proteins into the membrane. This is Putative membrane protein insertion efficiency factor from Legionella pneumophila (strain Lens).